A 1102-amino-acid chain; its full sequence is WASH complex subunit 4 (1102 aa).

This sequence belongs to the SWIP family. Component of the WASH complex.

It localises to the early endosome. Functionally, acts at least in part as component of the WASH complex which may regulate wash nucleation-promoting factor (NPF) activity and is required for its membrane targeting during endosomal sorting. During embryogenesis, not involved in the wash-dependent developmental migration of hemocytes anteriorly from the tail. The polypeptide is WASH complex subunit 4 (Drosophila melanogaster (Fruit fly)).